A 199-amino-acid polypeptide reads, in one-letter code: Probable GTP-binding protein EngB (199 aa).

An EngB-type G domain is found at 28 to 199; the sequence is DLPEIALAGR…DSWDAILEQV (172 aa). Residues 36–43, 63–67, 81–84, 148–151, and 180–182 contribute to the GTP site; these read GRSNVGKS, GKTQL, DVPG, TKAD, and FSS. Mg(2+)-binding residues include serine 43 and threonine 65.

This sequence belongs to the TRAFAC class TrmE-Era-EngA-EngB-Septin-like GTPase superfamily. EngB GTPase family. Mg(2+) serves as cofactor.

Functionally, necessary for normal cell division and for the maintenance of normal septation. The polypeptide is Probable GTP-binding protein EngB (Streptococcus pyogenes serotype M3 (strain SSI-1)).